Reading from the N-terminus, the 263-residue chain is Meiotic drive suppressor wtf6 (263 aa).

Residues 1–68 (MKNNYTSLKS…REKNPSRSTD (68 aa)) are disordered. Positions 19–30 (KTDHEIDLEKGP) are enriched in basic and acidic residues. The next 3 helical transmembrane spans lie at 73–93 (FLIK…PAVC), 110–130 (WTLF…LTYF), and 201–221 (SASA…AETV).

Belongs to the WTF family. As to quaternary structure, homomer. Interacts with other proteins that exhibit high sequence similarity.

The protein resides in the spore membrane. It localises to the vacuole membrane. Acts as a suppressor component of the dual wtf meiotic drive system, and can suppress but not confer meiotic drive by compatible poisons. Wtf meiotic drive systems promote unequal transmission of alleles from the parental zygote to progeny spores by encoding a poison and an antidote from the same locus; the poison is trans-acting and forms toxic aggregates in all spores within an ascus, wherease the antidote is spore-specific and targets aggregates for degradation by the vacuole. Meiotic drive by wtf systems therefore lead to poisoning of all progeny that do not inherit the dual poison/antidote allele, or express a compatible antidote. The protein is Meiotic drive suppressor wtf6 of Schizosaccharomyces kambucha (Fission yeast).